Consider the following 281-residue polypeptide: NNLISFTMKRIVLFLILLTKAASANLISFTFKRFNETNLILQRDATVSSGKLRITKAAENGVPTAGSLGRAFYSTPIQIWDNTTGTVAAWATSFTFNLQAPNAASPADGLAFALVPVGSQPKDKGGFLGLFDSKNYASSNQTVAVEFDTFYNGGWDPTERHIGIDVNSIKSIKTTSWDFANGENAEVLITYDSSTNLLVASLVHPSQKTSFIVSERVDLTSVLPEWVSVGFSATTGLSKGYVETNEVLSWSFASKISINKEDEENKLLISNLEGKAINNLA.

N-linked (GlcNAc...) asparagine glycosylation is found at Asn35, Asn82, and Asn140.

Belongs to the leguminous lectin family. As to quaternary structure, tetramer of 2 alpha and 2 beta chains. In terms of processing, glycosylated. The beta chain is produced by partial proteolytic processing of the alpha chain.

Its function is as follows. D-galactose-binding lectin. The chain is Lectin alpha chain from Lablab purpureus (Hyacinth bean).